The chain runs to 285 residues: Protoheme IX farnesyltransferase (285 aa).

Transmembrane regions (helical) follow at residues 16–36, 40–60, 106–126, 136–156, 165–185, 217–237, and 265–285; these read AKPK…ILAF, WYNL…SMII, LLAN…YVFV, WLNI…GYAA, SLLL…ALAL, ILMI…YVII, and YKFS…SFIL.

It belongs to the UbiA prenyltransferase family. Protoheme IX farnesyltransferase subfamily.

It localises to the cell membrane. The catalysed reaction is heme b + (2E,6E)-farnesyl diphosphate + H2O = Fe(II)-heme o + diphosphate. It participates in porphyrin-containing compound metabolism; heme O biosynthesis; heme O from protoheme: step 1/1. In terms of biological role, converts heme B (protoheme IX) to heme O by substitution of the vinyl group on carbon 2 of heme B porphyrin ring with a hydroxyethyl farnesyl side group. The chain is Protoheme IX farnesyltransferase from Sulfolobus acidocaldarius (strain ATCC 33909 / DSM 639 / JCM 8929 / NBRC 15157 / NCIMB 11770).